The sequence spans 86 residues: Anti-adapter protein IraP (86 aa).

Residues 1 to 36 adopt a coiled-coil conformation; that stretch reads MKNLIAELLLKLAQKEEESKELVAQVEALEIIVTAM.

This sequence belongs to the IraP family. As to quaternary structure, interacts with RssB.

Its subcellular location is the cytoplasm. Functionally, inhibits RpoS proteolysis by regulating RssB activity, thereby increasing the stability of the sigma stress factor RpoS especially during phosphate and magnesium starvation, but also in stationary phase and during nitrogen starvation. Its effect on RpoS stability is due to its interaction with RssB, which probably blocks the interaction of RssB with RpoS, and the consequent delivery of the RssB-RpoS complex to the ClpXP protein degradation pathway. In Salmonella choleraesuis (strain SC-B67), this protein is Anti-adapter protein IraP.